Consider the following 86-residue polypeptide: Omega-theraphotoxin-Hhn1d (86 aa).

Positions 1 to 21 are cleaved as a signal peptide; it reads MKSIVFVALFGLALLAVVCSA. Residues 22–50 constitute a propeptide that is removed on maturation; sequence SEDAHKELLKEVVRAMVVDKTDAVQAEER. 3 disulfide bridges follow: cysteine 52-cysteine 66, cysteine 59-cysteine 71, and cysteine 65-cysteine 78.

The protein belongs to the neurotoxin 10 (Hwtx-1) family. 17 (Hntx-9) subfamily. As to expression, expressed by the venom gland.

It localises to the secreted. Functionally, ion channel inhibitor. The protein is Omega-theraphotoxin-Hhn1d of Cyriopagopus hainanus (Chinese bird spider).